A 257-amino-acid chain; its full sequence is Imidazole glycerol phosphate synthase subunit HisF (257 aa).

Active-site residues include Asp12 and Asp131.

The protein belongs to the HisA/HisF family. Heterodimer of HisH and HisF.

It localises to the cytoplasm. The enzyme catalyses 5-[(5-phospho-1-deoxy-D-ribulos-1-ylimino)methylamino]-1-(5-phospho-beta-D-ribosyl)imidazole-4-carboxamide + L-glutamine = D-erythro-1-(imidazol-4-yl)glycerol 3-phosphate + 5-amino-1-(5-phospho-beta-D-ribosyl)imidazole-4-carboxamide + L-glutamate + H(+). The protein operates within amino-acid biosynthesis; L-histidine biosynthesis; L-histidine from 5-phospho-alpha-D-ribose 1-diphosphate: step 5/9. Functionally, IGPS catalyzes the conversion of PRFAR and glutamine to IGP, AICAR and glutamate. The HisF subunit catalyzes the cyclization activity that produces IGP and AICAR from PRFAR using the ammonia provided by the HisH subunit. The polypeptide is Imidazole glycerol phosphate synthase subunit HisF (Saccharophagus degradans (strain 2-40 / ATCC 43961 / DSM 17024)).